Consider the following 470-residue polypeptide: Proton-coupled amino acid transporter 3 (470 aa).

Topologically, residues Met-1–Gln-46 are cytoplasmic. Positions Ser-10–Gln-20 are enriched in polar residues. Residues Ser-10–Asn-33 form a disordered region. The span at Ser-21 to Ser-31 shows a compositional bias: low complexity. A helical membrane pass occupies residues Thr-47 to Ile-67. Over Lys-68 to Gly-71 the chain is Extracellular. The helical transmembrane segment at Leu-72–Ile-92 threads the bilayer. The Cytoplasmic portion of the chain corresponds to Leu-93 to Thr-137. The helical transmembrane segment at Val-138 to Ala-158 threads the bilayer. At Asp-159–Pro-185 the chain is on the extracellular side. Residues Ile-186 to Ile-206 traverse the membrane as a helical segment. Residues Gln-207–Lys-210 lie on the Cytoplasmic side of the membrane. The chain crosses the membrane as a helical span at residues Val-211–Phe-231. Over Glu-232–Thr-252 the chain is Extracellular. A helical membrane pass occupies residues Phe-253–Leu-273. At Lys-274–Ser-284 the chain is on the cytoplasmic side. The helical transmembrane segment at Phe-285 to Gly-305 threads the bilayer. The Extracellular segment spans residues Tyr-306–Gly-337. The chain crosses the membrane as a helical span at residues Ile-338–Ile-358. Over Ser-359–Leu-367 the chain is Cytoplasmic. The helical transmembrane segment at Phe-368–Ile-388 threads the bilayer. The Extracellular segment spans residues Pro-389 to Asp-392. The helical transmembrane segment at Leu-393–Leu-413 threads the bilayer. The Cytoplasmic segment spans residues Leu-414–Ser-425. A helical transmembrane segment spans residues Cys-426–Gly-446. Residues Thr-447–Ala-470 are Extracellular-facing.

Belongs to the amino acid/polyamine transporter 2 family. In terms of tissue distribution, specifically expressed in testis.

The protein resides in the membrane. The chain is Proton-coupled amino acid transporter 3 (SLC36A3) from Homo sapiens (Human).